Here is a 60-residue protein sequence, read N- to C-terminus: Mastoparan-VT1 (60 aa).

Positions 1-25 (MKNTILILFTAFIALLGFFGMSAEA) are cleaved as a signal peptide. Residues 26–45 (LADLKADPLAGPNPDADPEA) constitute a propeptide that is removed on maturation. AXPX repeat units follow at residues 31–34 (ADPL), 35–38 (AGPN), and 41–44 (ADPE). Leu59 carries the leucine amide modification.

The protein belongs to the MCD family. Mastoparan subfamily. Expressed by the venom gland.

Its subcellular location is the secreted. In terms of biological role, antimicrobial peptide with activities against Gram-negative and Gram-positive bacteria and the fungi C.albicans and C.parapsilosis. Exhibits little hemolytic activity against washed human erythrocytes. Also acts as a mast cell degranulating peptide. Its mast cell degranulation activity may be related to the activation of G-protein coupled receptors in mast cells as well as interaction with other proteins located in cell endosomal membranes in the mast cells. Functionally, antimicrobial peptide with activities against Gram-negative and Gram-positive bacteria and the fungi C.albicans and C.parapsilosis. Exhibits little hemolytic activity against washed human erythrocytes. Also acts as a mast cell degranulating peptide. The polypeptide is Mastoparan-VT1 (Vespa tropica (Greater banded hornet)).